Here is a 173-residue protein sequence, read N- to C-terminus: Lipoprotein signal peptidase (173 aa).

A run of 2 helical transmembrane segments spans residues 67–87 (WISLLVSVGLCVYALVGPHLG) and 92–112 (MGFGLLLGGAVGNGFDRFAFG). Active-site residues include aspartate 116 and aspartate 132. The chain crosses the membrane as a helical span at residues 125–145 (FPVFNGADIAINLGLACLLIG). Positions 151–173 (SRTPAPARPASKQIREPTDTTGG) are disordered. The span at 163–173 (QIREPTDTTGG) shows a compositional bias: basic and acidic residues.

Belongs to the peptidase A8 family.

It localises to the cell inner membrane. It catalyses the reaction Release of signal peptides from bacterial membrane prolipoproteins. Hydrolyzes -Xaa-Yaa-Zaa-|-(S,diacylglyceryl)Cys-, in which Xaa is hydrophobic (preferably Leu), and Yaa (Ala or Ser) and Zaa (Gly or Ala) have small, neutral side chains.. It participates in protein modification; lipoprotein biosynthesis (signal peptide cleavage). This protein specifically catalyzes the removal of signal peptides from prolipoproteins. The sequence is that of Lipoprotein signal peptidase from Gloeobacter violaceus (strain ATCC 29082 / PCC 7421).